The primary structure comprises 810 residues: Eukaryotic translation initiation factor 3 subunit C (810 aa).

The segment covering 1 to 11 (MSRFFATNYNY) has biased composition (polar residues). Positions 1 to 98 (MSRFFATNYN…DSDESDEEDG (98 aa)) are disordered. Over residues 12 to 33 (DETSSSSEEDLLSSSEELLSSS) the composition is skewed to low complexity. Acidic residues predominate over residues 34-58 (EEGELSDDSLFNDESESESDFDSDD). Positions 605 to 780 (YHQHINLDLV…TYIVIEKGDE (176 aa)) constitute a PCI domain.

This sequence belongs to the eIF-3 subunit C family. Component of the eukaryotic translation initiation factor 3 (eIF-3) complex.

The protein resides in the cytoplasm. In terms of biological role, component of the eukaryotic translation initiation factor 3 (eIF-3) complex, which is involved in protein synthesis of a specialized repertoire of mRNAs and, together with other initiation factors, stimulates binding of mRNA and methionyl-tRNAi to the 40S ribosome. The eIF-3 complex specifically targets and initiates translation of a subset of mRNAs involved in cell proliferation. This Candida glabrata (strain ATCC 2001 / BCRC 20586 / JCM 3761 / NBRC 0622 / NRRL Y-65 / CBS 138) (Yeast) protein is Eukaryotic translation initiation factor 3 subunit C.